The chain runs to 395 residues: Acid ceramidase (395 aa).

The first 21 residues, 1–21, serve as a signal peptide directing secretion; the sequence is MLGRSRLTFVLLSVTVTCSVA. C31 and C340 are oxidised to a cystine. The Nucleophile role is filled by C143. Residues N173, N259, N342, and N348 are each glycosylated (N-linked (GlcNAc...) asparagine). C388 and C392 are oxidised to a cystine.

Belongs to the acid ceramidase family. In terms of assembly, heterodimer; disulfide-linked. The heterodimer is composed of the disulfide-linked alpha and beta chains produced by autocatalytic cleavage of the precursor. N-glycosylated. Post-translationally, proteolytically cleaved into two chains alpha and beta that remain associated via a disulfide bond. Cleavage gives rise to a conformation change that activates the enzyme. The same catalytic Cys residue mediates the autoproteolytic cleavage and subsequent hydrolysis of lipid substrates. The beta chain may undergo an additional C-terminal processing.

It localises to the lysosome. The protein resides in the secreted. The enzyme catalyses an N-acylsphing-4-enine + H2O = sphing-4-enine + a fatty acid. The catalysed reaction is N-dodecanoylsphing-4-enine + H2O = dodecanoate + sphing-4-enine. It carries out the reaction N-tetradecanoylsphing-4-enine + H2O = tetradecanoate + sphing-4-enine. It catalyses the reaction N-hexadecanoylsphing-4-enine + H2O = sphing-4-enine + hexadecanoate. The enzyme catalyses N-octadecanoylsphing-4-enine + H2O = sphing-4-enine + octadecanoate. The catalysed reaction is N-dodecanoyl-(4R)-hydroxysphinganine + H2O = (4R)-hydroxysphinganine + dodecanoate. It carries out the reaction N-(dodecanoyl)-sphinganine + H2O = dodecanoate + sphinganine. It catalyses the reaction N-(acetyl)-sphing-4-enine + H2O = sphing-4-enine + acetate. The enzyme catalyses N-(hexanoyl)sphing-4-enine + H2O = hexanoate + sphing-4-enine. The catalysed reaction is N-octanoylsphing-4-enine + H2O = octanoate + sphing-4-enine. It carries out the reaction N-(9Z-octadecenoyl)-sphing-4-enine + H2O = sphing-4-enine + (9Z)-octadecenoate. It catalyses the reaction N-dodecanoylethanolamine + H2O = dodecanoate + ethanolamine. It participates in lipid metabolism; sphingolipid metabolism. Lysosomal ceramidase that hydrolyzes sphingolipid ceramides into sphingosine and free fatty acids at acidic pH. Ceramides, sphingosine, and its phosphorylated form sphingosine-1-phosphate are bioactive lipids that mediate cellular signaling pathways regulating several biological processes including cell proliferation, apoptosis and differentiation. Has a higher catalytic efficiency towards C12-ceramides versus other ceramides. Also catalyzes the reverse reaction allowing the synthesis of ceramides from fatty acids and sphingosine. For the reverse synthetic reaction, the natural sphingosine D-erythro isomer is more efficiently utilized as a substrate compared to D-erythro-dihydrosphingosine and D-erythro-phytosphingosine, while the fatty acids with chain lengths of 12 or 14 carbons are the most efficiently used. Also has an N-acylethanolamine hydrolase activity. By regulating the levels of ceramides, sphingosine and sphingosine-1-phosphate in the epidermis, mediates the calcium-induced differentiation of epidermal keratinocytes. Also indirectly regulates tumor necrosis factor/TNF-induced apoptosis. By regulating the intracellular balance between ceramides and sphingosine, in adrenocortical cells, probably also acts as a regulator of steroidogenesis. In Balaenoptera acutorostrata scammoni (North Pacific minke whale), this protein is Acid ceramidase.